A 206-amino-acid polypeptide reads, in one-letter code: ATP-dependent Clp protease proteolytic subunit (206 aa).

Serine 101 serves as the catalytic Nucleophile. The active site involves histidine 126.

It belongs to the peptidase S14 family. As to quaternary structure, component of the chloroplastic Clp protease core complex.

The protein localises to the plastid. The protein resides in the chloroplast stroma. The enzyme catalyses Hydrolysis of proteins to small peptides in the presence of ATP and magnesium. alpha-casein is the usual test substrate. In the absence of ATP, only oligopeptides shorter than five residues are hydrolyzed (such as succinyl-Leu-Tyr-|-NHMec, and Leu-Tyr-Leu-|-Tyr-Trp, in which cleavage of the -Tyr-|-Leu- and -Tyr-|-Trp bonds also occurs).. Functionally, cleaves peptides in various proteins in a process that requires ATP hydrolysis. Has a chymotrypsin-like activity. Plays a major role in the degradation of misfolded proteins. The protein is ATP-dependent Clp protease proteolytic subunit of Solanum lycopersicum (Tomato).